Here is a 62-residue protein sequence, read N- to C-terminus: Large ribosomal subunit protein bL28 (62 aa).

Positions 1 to 28 (MARVCAITGRKARSGNSRSHAMNATKRK) are disordered.

The protein belongs to the bacterial ribosomal protein bL28 family.

The sequence is that of Large ribosomal subunit protein bL28 from Bacillus thuringiensis (strain Al Hakam).